The primary structure comprises 323 residues: UDP-glucuronate 4-epimerase (323 aa).

11 to 13 contacts NAD(+); it reads GFI. Y152 acts as the Proton acceptor in catalysis. K156 provides a ligand contact to NAD(+).

The protein belongs to the NAD(P)-dependent epimerase/dehydratase family. Requires NAD(+) as cofactor.

It carries out the reaction UDP-alpha-D-glucuronate = UDP-alpha-D-galacturonate. In terms of biological role, catalyzes the interconversion of UDP-D-glucuronic acid (UDP-GlcA) and UDP-D-galacturonic acid (UDP-GalA). The polypeptide is UDP-glucuronate 4-epimerase (Thermodesulfobacterium geofontis (strain OPF15)).